A 265-amino-acid polypeptide reads, in one-letter code: MSDFLSTILEEKKREVEQRKRTISEEFLEERSASAMERRSLCRALATPGRRGINIIAEVKRGSPSRGVMNPGLDAAQFARRYESCGAAAVSVLTDAGFFHGKAGDLRSARAAVKIPVLRKDFIVSRYQIFESAVMGADAVLLIVRAISPELLGECLRLCRRIGLDALVEVHSAEELDAASEAGAVLIGMNNRDLSTFTTDIRTSIQLVRRMRPGQVAVSESGIRCREQIDRLLDAGIWNFLIGESLVTAPEPEAVLAHLFGAYAA.

It belongs to the TrpC family.

It catalyses the reaction 1-(2-carboxyphenylamino)-1-deoxy-D-ribulose 5-phosphate + H(+) = (1S,2R)-1-C-(indol-3-yl)glycerol 3-phosphate + CO2 + H2O. The protein operates within amino-acid biosynthesis; L-tryptophan biosynthesis; L-tryptophan from chorismate: step 4/5. The chain is Indole-3-glycerol phosphate synthase from Syntrophobacter fumaroxidans (strain DSM 10017 / MPOB).